The chain runs to 1250 residues: DNA-directed RNA polymerase subunit beta (1250 aa).

The segment at 1139–1226 (GGAELAKPAP…DLFDEGDEDL (88 aa)) is disordered. Acidic residues-rich tracts occupy residues 1155-1183 (ESGE…DPEE) and 1207-1226 (ADDD…DEDL).

The protein belongs to the RNA polymerase beta chain family. In terms of assembly, the RNAP catalytic core consists of 2 alpha, 1 beta, 1 beta' and 1 omega subunit. When a sigma factor is associated with the core the holoenzyme is formed, which can initiate transcription.

The catalysed reaction is RNA(n) + a ribonucleoside 5'-triphosphate = RNA(n+1) + diphosphate. DNA-dependent RNA polymerase catalyzes the transcription of DNA into RNA using the four ribonucleoside triphosphates as substrates. The protein is DNA-directed RNA polymerase subunit beta of Symbiobacterium thermophilum (strain DSM 24528 / JCM 14929 / IAM 14863 / T).